Reading from the N-terminus, the 85-residue chain is MADIKALITTVVTPLVQYPDDIKVDFKETTRYLEYNLTVNPEDIGRVIGRQGRVASAIRTIVYSVRVSGPKRVRLTIEDGQQKNS.

A KH domain is found at 32 to 85; that stretch reads YLEYNLTVNPEDIGRVIGRQGRVASAIRTIVYSVRVSGPKRVRLTIEDGQQKNS.

It belongs to the KhpA RNA-binding protein family. In terms of assembly, forms a complex with KhpB.

Its subcellular location is the cytoplasm. Its function is as follows. A probable RNA chaperone. Forms a complex with KhpB which binds to cellular RNA and controls its expression. Plays a role in peptidoglycan (PG) homeostasis and cell length regulation. In terms of biological role, necessary for correct cell elongation. This chain is RNA-binding protein KhpA, found in Lactiplantibacillus plantarum (strain ATCC BAA-793 / NCIMB 8826 / WCFS1) (Lactobacillus plantarum).